A 468-amino-acid chain; its full sequence is 6-phospho-beta-galactosidase (468 aa).

5 residues coordinate D-galactose 6-phosphate: glutamine 19, histidine 116, asparagine 159, glutamate 160, and asparagine 297. Glutamate 160 serves as the catalytic Proton donor. Glutamate 375 functions as the Nucleophile in the catalytic mechanism. D-galactose 6-phosphate is bound by residues serine 428, tryptophan 429, lysine 435, and tyrosine 437.

Belongs to the glycosyl hydrolase 1 family.

It carries out the reaction a 6-phospho-beta-D-galactoside + H2O = D-galactose 6-phosphate + an alcohol. It participates in carbohydrate metabolism; lactose degradation; D-galactose 6-phosphate and beta-D-glucose from lactose 6-phosphate: step 1/1. This Streptococcus sanguinis (strain SK36) protein is 6-phospho-beta-galactosidase.